Reading from the N-terminus, the 444-residue chain is ATP-dependent protease ATPase subunit HslU (444 aa).

ATP is bound by residues Ile18, 60-65 (GVGKTE), Asp256, Glu322, and Arg394.

The protein belongs to the ClpX chaperone family. HslU subfamily. As to quaternary structure, a double ring-shaped homohexamer of HslV is capped on each side by a ring-shaped HslU homohexamer. The assembly of the HslU/HslV complex is dependent on binding of ATP.

The protein resides in the cytoplasm. Its function is as follows. ATPase subunit of a proteasome-like degradation complex; this subunit has chaperone activity. The binding of ATP and its subsequent hydrolysis by HslU are essential for unfolding of protein substrates subsequently hydrolyzed by HslV. HslU recognizes the N-terminal part of its protein substrates and unfolds these before they are guided to HslV for hydrolysis. The sequence is that of ATP-dependent protease ATPase subunit HslU from Klebsiella pneumoniae (strain 342).